The following is a 652-amino-acid chain: Translation factor guf1, mitochondrial (652 aa).

The transit peptide at 1-44 directs the protein to the mitochondrion; sequence MSIFRLSRTFSLETCLKSSSFKIRWRFFSVSYASRKLASEDNKP. The tr-type G domain occupies 56 to 237; that stretch reads NRVRNWAVIA…EIIQKIPPPK (182 aa). Residues 65 to 72, 130 to 134, and 184 to 187 each bind GTP; these read AHIDHGKS, DTPGH, and NKVD.

This sequence belongs to the TRAFAC class translation factor GTPase superfamily. Classic translation factor GTPase family. LepA subfamily.

The protein resides in the mitochondrion inner membrane. It carries out the reaction GTP + H2O = GDP + phosphate + H(+). In terms of biological role, promotes mitochondrial protein synthesis. May act as a fidelity factor of the translation reaction, by catalyzing a one-codon backward translocation of tRNAs on improperly translocated ribosomes. Binds to mitochondrial ribosomes in a GTP-dependent manner. The polypeptide is Translation factor guf1, mitochondrial (guf1) (Schizosaccharomyces pombe (strain 972 / ATCC 24843) (Fission yeast)).